The following is a 184-amino-acid chain: Photosystem I assembly protein Ycf4 (184 aa).

A run of 2 helical transmembrane segments spans residues 22–42 and 57–77; these read VCWA…GTSS and IIFF…LFIS.

Belongs to the Ycf4 family.

It is found in the plastid. The protein resides in the chloroplast thylakoid membrane. Its function is as follows. Seems to be required for the assembly of the photosystem I complex. The polypeptide is Photosystem I assembly protein Ycf4 (Morus indica (Mulberry)).